The primary structure comprises 312 residues: Acetylglutamate kinase (312 aa).

Substrate contacts are provided by residues 77 to 78 (GG), arginine 99, and asparagine 192.

It belongs to the acetylglutamate kinase family. ArgB subfamily.

The protein resides in the cytoplasm. It carries out the reaction N-acetyl-L-glutamate + ATP = N-acetyl-L-glutamyl 5-phosphate + ADP. The protein operates within amino-acid biosynthesis; L-arginine biosynthesis; N(2)-acetyl-L-ornithine from L-glutamate: step 2/4. Functionally, catalyzes the ATP-dependent phosphorylation of N-acetyl-L-glutamate. This Synechococcus sp. (strain JA-2-3B'a(2-13)) (Cyanobacteria bacterium Yellowstone B-Prime) protein is Acetylglutamate kinase.